The primary structure comprises 881 residues: Protein translocase subunit SecA (881 aa).

Residues Gln-83, 101 to 105 (GEGKT), and Asp-492 contribute to the ATP site.

Belongs to the SecA family.

It is found in the plastid. It localises to the chloroplast stroma. Its subcellular location is the chloroplast thylakoid membrane. It catalyses the reaction ATP + H2O + cellular proteinSide 1 = ADP + phosphate + cellular proteinSide 2.. In terms of biological role, has a central role in coupling the hydrolysis of ATP to the transfer of proteins across the thylakoid membrane. In Emiliania huxleyi (Coccolithophore), this protein is Protein translocase subunit SecA.